The following is a 242-amino-acid chain: tRNA pseudouridine synthase A (242 aa).

The Nucleophile role is filled by Asp51. Residue Tyr107 coordinates substrate.

It belongs to the tRNA pseudouridine synthase TruA family. As to quaternary structure, homodimer.

The catalysed reaction is uridine(38/39/40) in tRNA = pseudouridine(38/39/40) in tRNA. Formation of pseudouridine at positions 38, 39 and 40 in the anticodon stem and loop of transfer RNAs. The chain is tRNA pseudouridine synthase A from Helicobacter pylori (strain G27).